Here is a 158-residue protein sequence, read N- to C-terminus: Transcription elongation factor GreA (158 aa).

A coiled-coil region spans residues 47–74 (AEYHAAKEEQSHNEGRIAELEDKLARAD).

Belongs to the GreA/GreB family.

Functionally, necessary for efficient RNA polymerase transcription elongation past template-encoded arresting sites. The arresting sites in DNA have the property of trapping a certain fraction of elongating RNA polymerases that pass through, resulting in locked ternary complexes. Cleavage of the nascent transcript by cleavage factors such as GreA or GreB allows the resumption of elongation from the new 3'terminus. GreA releases sequences of 2 to 3 nucleotides. This is Transcription elongation factor GreA from Bradyrhizobium sp. (strain BTAi1 / ATCC BAA-1182).